Here is an 803-residue protein sequence, read N- to C-terminus: Volume-regulated anion channel subunit LRRC8C (803 aa).

Residues 1–22 lie on the Cytoplasmic side of the membrane; the sequence is MIPVTEFRQFSEQQPAFRVLKP. The chain crosses the membrane as a helical span at residues 23-48; the sequence is WWDVFTDYLSVAMLMIGVFGCTLQVM. Topologically, residues 49-124 are extracellular; sequence QDKIICLPKR…CYERALHWYA (76 aa). Intrachain disulfides connect C54–C308 and C115–C293. A helical membrane pass occupies residues 125 to 144; the sequence is KYFPYLVLIHTLVFMLCSNF. At 145-262 the chain is on the cytoplasmic side; sequence WFKFPGSSSK…EEGDILYAMY (118 aa). A disordered region spans residues 177-206; it reads EVSGEDSEEKDNRKNNMNRSGTIQSGPEGN. Over residues 191–206 the composition is skewed to polar residues; the sequence is NNMNRSGTIQSGPEGN. Phosphoserine occurs at positions 212 and 215. A helical membrane pass occupies residues 263–284; that stretch reads VRQTVLKVIKFLIIIAYNSALV. Topologically, residues 285–314 are extracellular; that stretch reads SKVQFTVDCNVDIQDMTGYKNFSCNHTMAH. The helical transmembrane segment at 315–339 threads the bilayer; the sequence is LFSKLSFCYLCFVSIYGLTCLYTLY. Over 340 to 803 the chain is Cytoplasmic; sequence WLFYRSLREY…SDVREQMKAD (464 aa). LRR repeat units lie at residues 409–420, 421–443, 446–466, 467–488, 490–513, 515–537, 541–563, 566–586, 588–611, 613–635, 637–659, 660–682, 684–705, 706–728, 730–751, 752–774, and 776–799; these read WTPDKLRQKLQT, NAHN…VFEI, LQSL…IAQL, DNLQ…ALSF, KENL…MYGL, NLEE…TLES, LKSL…VVDV, HLQK…NNLK, MTNL…VFSL, SLQE…SFQH, RKLT…IKKL, TSLE…LFLC, KIRY…IGVL, QSLQ…LYFC, KLKT…IGNL, LFLS…LGDC, and ALKR…VREQ.

The protein belongs to the LRRC8 family. As to quaternary structure, heterohexamer; oligomerizes with other LRRC8 proteins (LRRC8A, LRRC8B, LRRC8D and/or LRRC8E) to form a heterohexamer. Homoheptamer; inactive, likely because it is not targeted to the plasma membrane in the absence of LRRC8A. In vivo, the subunit composition may depend primarily on expression levels, and heterooligomeric channels containing various proportions of the different LRRC8 proteins may coexist. Expressed at very low levels in adipose tissue.

Its subcellular location is the cell membrane. The protein localises to the endoplasmic reticulum membrane. It catalyses the reaction chloride(in) = chloride(out). It carries out the reaction iodide(out) = iodide(in). The catalysed reaction is taurine(out) = taurine(in). The enzyme catalyses 2',3'-cGAMP(out) = 2',3'-cGAMP(in). Non-essential component of the volume-regulated anion channel (VRAC, also named VSOAC channel), an anion channel required to maintain a constant cell volume in response to extracellular or intracellular osmotic changes. The VRAC channel conducts iodide better than chloride and can also conduct organic osmolytes like taurine. Plays a redundant role in the efflux of amino acids, such as aspartate and glutamate, in response to osmotic stress. The VRAC channel also mediates transport of immunoreactive cyclic dinucleotide GMP-AMP (2'-3'-cGAMP), an immune messenger produced in response to DNA virus in the cytosol. Channel activity requires LRRC8A plus at least one other family member (LRRC8B, LRRC8C, LRRC8D or LRRC8E); channel characteristics depend on the precise subunit composition. May play a role in adipogenesis. This Mus musculus (Mouse) protein is Volume-regulated anion channel subunit LRRC8C.